Consider the following 357-residue polypeptide: Peptide chain release factor 1 (357 aa).

Residue glutamine 234 is modified to N5-methylglutamine.

Belongs to the prokaryotic/mitochondrial release factor family. In terms of processing, methylated by PrmC. Methylation increases the termination efficiency of RF1.

The protein localises to the cytoplasm. Its function is as follows. Peptide chain release factor 1 directs the termination of translation in response to the peptide chain termination codons UAG and UAA. The chain is Peptide chain release factor 1 (prfA) from Lactococcus lactis subsp. lactis (strain IL1403) (Streptococcus lactis).